Reading from the N-terminus, the 957-residue chain is Glycine dehydrogenase (decarboxylating) (957 aa).

Residue Lys708 is modified to N6-(pyridoxal phosphate)lysine.

The protein belongs to the GcvP family. As to quaternary structure, the glycine cleavage system is composed of four proteins: P, T, L and H. Pyridoxal 5'-phosphate is required as a cofactor.

It catalyses the reaction N(6)-[(R)-lipoyl]-L-lysyl-[glycine-cleavage complex H protein] + glycine + H(+) = N(6)-[(R)-S(8)-aminomethyldihydrolipoyl]-L-lysyl-[glycine-cleavage complex H protein] + CO2. The glycine cleavage system catalyzes the degradation of glycine. The P protein binds the alpha-amino group of glycine through its pyridoxal phosphate cofactor; CO(2) is released and the remaining methylamine moiety is then transferred to the lipoamide cofactor of the H protein. The polypeptide is Glycine dehydrogenase (decarboxylating) (Escherichia coli (strain SE11)).